The primary structure comprises 243 residues: Triosephosphate isomerase (243 aa).

A substrate-binding site is contributed by 9–11 (NWK). The Electrophile role is filled by H96. E165 serves as the catalytic Proton acceptor. Substrate contacts are provided by residues G171, S204, and 225–226 (GG).

It belongs to the triosephosphate isomerase family. As to quaternary structure, homodimer.

It is found in the cytoplasm. The catalysed reaction is D-glyceraldehyde 3-phosphate = dihydroxyacetone phosphate. Its pathway is carbohydrate biosynthesis; gluconeogenesis. The protein operates within carbohydrate degradation; glycolysis; D-glyceraldehyde 3-phosphate from glycerone phosphate: step 1/1. Functionally, involved in the gluconeogenesis. Catalyzes stereospecifically the conversion of dihydroxyacetone phosphate (DHAP) to D-glyceraldehyde-3-phosphate (G3P). The protein is Triosephosphate isomerase of Prochlorococcus marinus (strain SARG / CCMP1375 / SS120).